Consider the following 1770-residue polypeptide: Transposon Ty2-C Gag-Pol polyprotein (1770 aa).

3 stretches are compositionally biased toward polar residues: residues methionine 1–arginine 11, alanine 19–asparagine 39, and lysine 49–threonine 60. 2 disordered regions span residues methionine 1–histidine 88 and serine 355–histidine 453. The tract at residues glutamate 295–histidine 397 is RNA-binding. The segment covering threonine 369–asparagine 382 has biased composition (low complexity). Polar residues-rich tracts occupy residues isoleucine 399–valine 408 and glutamate 415–glutamine 435. Catalysis depends on aspartate 457, which acts as the For protease activity; shared with dimeric partner. Residues asparagine 579 to cysteine 636 are integrase-type zinc finger-like. An Integrase catalytic domain is found at glutamate 656 to proline 831. Aspartate 667 and aspartate 732 together coordinate Mg(2+). Disordered stretches follow at residues glutamate 1003–leucine 1038 and glycine 1057–glutamate 1205. Composition is skewed to polar residues over residues glutamate 1009–arginine 1024 and glutamine 1065–serine 1082. Positions lysine 1193 to arginine 1227 match the Bipartite nuclear localization signal motif. The 139-residue stretch at asparagine 1353–glutamine 1491 folds into the Reverse transcriptase Ty1/copia-type domain. The Mg(2+) site is built by aspartate 1361, aspartate 1442, aspartate 1443, aspartate 1625, glutamate 1667, and aspartate 1700. An RNase H Ty1/copia-type domain is found at aspartate 1625–lysine 1767.

As to quaternary structure, the capsid protein forms a homotrimer, from which the VLPs are assembled. The protease is a homodimer, whose active site consists of two apposed aspartic acid residues. Post-translationally, initially, virus-like particles (VLPs) are composed of the structural unprocessed proteins Gag and Gag-Pol, and also contain the host initiator methionine tRNA (tRNA(i)-Met) which serves as a primer for minus-strand DNA synthesis, and a dimer of genomic Ty RNA. Processing of the polyproteins occurs within the particle and proceeds by an ordered pathway, called maturation. First, the protease (PR) is released by autocatalytic cleavage of the Gag-Pol polyprotein, and this cleavage is a prerequisite for subsequent processing at the remaining sites to release the mature structural and catalytic proteins. Maturation takes place prior to the RT reaction and is required to produce transposition-competent VLPs.

It is found in the cytoplasm. Its subcellular location is the nucleus. It catalyses the reaction DNA(n) + a 2'-deoxyribonucleoside 5'-triphosphate = DNA(n+1) + diphosphate. The catalysed reaction is Endonucleolytic cleavage to 5'-phosphomonoester.. Capsid protein (CA) is the structural component of the virus-like particle (VLP), forming the shell that encapsulates the retrotransposons dimeric RNA genome. The particles are assembled from trimer-clustered units and there are holes in the capsid shells that allow for the diffusion of macromolecules. CA also has nucleocapsid-like chaperone activity, promoting primer tRNA(i)-Met annealing to the multipartite primer-binding site (PBS), dimerization of Ty2 RNA and initiation of reverse transcription. In terms of biological role, the aspartyl protease (PR) mediates the proteolytic cleavages of the Gag and Gag-Pol polyproteins after assembly of the VLP. Functionally, reverse transcriptase/ribonuclease H (RT) is a multifunctional enzyme that catalyzes the conversion of the retro-elements RNA genome into dsDNA within the VLP. The enzyme displays a DNA polymerase activity that can copy either DNA or RNA templates, and a ribonuclease H (RNase H) activity that cleaves the RNA strand of RNA-DNA heteroduplexes during plus-strand synthesis and hydrolyzes RNA primers. The conversion leads to a linear dsDNA copy of the retrotransposon that includes long terminal repeats (LTRs) at both ends. Its function is as follows. Integrase (IN) targets the VLP to the nucleus, where a subparticle preintegration complex (PIC) containing at least integrase and the newly synthesized dsDNA copy of the retrotransposon must transit the nuclear membrane. Once in the nucleus, integrase performs the integration of the dsDNA into the host genome. The chain is Transposon Ty2-C Gag-Pol polyprotein (TY2B-C) from Saccharomyces cerevisiae (strain ATCC 204508 / S288c) (Baker's yeast).